We begin with the raw amino-acid sequence, 753 residues long: Rsm22-cox11 tandem protein 1, mitochondrial (753 aa).

A mitochondrion-targeting transit peptide spans 1–39 (MPILTCRYKILFLYNLRNCFTFQNQRCLIPYGTTTTIRW). [4Fe-4S] cluster contacts are provided by cysteine 323, cysteine 329, cysteine 342, and cysteine 430. Residues 571–591 (IYYLVAISIFALGLTYAAVPL) traverse the membrane as a helical segment. Topologically, residues 592-753 (YRLFCSKTGY…TNGNLLTKLN (162 aa)) are mitochondrial intermembrane.

In the N-terminal section; belongs to the methyltransferase superfamily. Rsm22 family. The protein in the C-terminal section; belongs to the COX11/CtaG family. In terms of assembly, associates with the mitochondrial ribosome (mitoribosome). Only transiently interacts with the mitoribosome. In terms of processing, specific enzymatic cleavages in vivo by mitochondrial processing peptidase (MPP) yield mature proteins including rsm22-1 and cox11-1.

Its subcellular location is the mitochondrion. The protein localises to the mitochondrion inner membrane. Functionally, mitochondrial ribosome (mitoribosome) assembly factor. Binds at the interface of the head and body domains of the mitochondrial small ribosomal subunit (mt-SSU), occluding the mRNA channel and preventing compaction of the head domain towards the body. Probable inactive methyltransferase: retains the characteristic folding and ability to bind S-adenosyl-L-methionine, but it probably lost its methyltransferase activity. Exerts its effect at some terminal stage of cytochrome c oxidase synthesis, probably by being involved in the insertion of the copper B into subunit I. The chain is Rsm22-cox11 tandem protein 1, mitochondrial (cox1101) from Schizosaccharomyces pombe (strain 972 / ATCC 24843) (Fission yeast).